The primary structure comprises 355 residues: UDP-N-acetylglucosamine--N-acetylmuramyl-(pentapeptide) pyrophosphoryl-undecaprenol N-acetylglucosamine transferase (355 aa).

UDP-N-acetyl-alpha-D-glucosamine contacts are provided by residues 15-17 (TGG), Asn-127, Arg-163, Ser-191, Ile-244, 263-268 (ALTVSE), and Gln-288.

It belongs to the glycosyltransferase 28 family. MurG subfamily.

Its subcellular location is the cell inner membrane. The catalysed reaction is di-trans,octa-cis-undecaprenyl diphospho-N-acetyl-alpha-D-muramoyl-L-alanyl-D-glutamyl-meso-2,6-diaminopimeloyl-D-alanyl-D-alanine + UDP-N-acetyl-alpha-D-glucosamine = di-trans,octa-cis-undecaprenyl diphospho-[N-acetyl-alpha-D-glucosaminyl-(1-&gt;4)]-N-acetyl-alpha-D-muramoyl-L-alanyl-D-glutamyl-meso-2,6-diaminopimeloyl-D-alanyl-D-alanine + UDP + H(+). It functions in the pathway cell wall biogenesis; peptidoglycan biosynthesis. Functionally, cell wall formation. Catalyzes the transfer of a GlcNAc subunit on undecaprenyl-pyrophosphoryl-MurNAc-pentapeptide (lipid intermediate I) to form undecaprenyl-pyrophosphoryl-MurNAc-(pentapeptide)GlcNAc (lipid intermediate II). This chain is UDP-N-acetylglucosamine--N-acetylmuramyl-(pentapeptide) pyrophosphoryl-undecaprenol N-acetylglucosamine transferase, found in Salmonella newport (strain SL254).